Reading from the N-terminus, the 142-residue chain is MSTFSAKPAEVVHEWFVIDATDKVLGRVASEVALRLRGKHKAIYTPHVDTGDYIVIINASKLKVTGTKSLDKVYYRHSGYPGGITATNFRDLQAKHPGRALEKAVKGMLPKGPLGYAMIKKLKVYGGAEHPHTAQQPKALEI.

It belongs to the universal ribosomal protein uL13 family. In terms of assembly, part of the 50S ribosomal subunit.

In terms of biological role, this protein is one of the early assembly proteins of the 50S ribosomal subunit, although it is not seen to bind rRNA by itself. It is important during the early stages of 50S assembly. This Acidovorax sp. (strain JS42) protein is Large ribosomal subunit protein uL13.